The primary structure comprises 546 residues: MAAKDVVFGDSARAKMVEGVNILANAVKVTLGPKGRNVVLERSFGGPTVTKDGVSVAKEIELKDKLQNMGAQMVKEVASKTSDNAGDGTTTATVLAQSIVREGMKYVASGMNPMDLKRGIDKAVAAAVEELKKISKPCTTNKEIAQVGSISANSDSSIGDRIAEAMDKVGKEGVITVEDGKSLADELDVVEGMQFDRGYLSPYFINNPDKQVAVLENPFVLLHDKKVSNIRDLLPVLEQVAKAGRPLLIIAEDVEGEALATLVVNNIRGILKTVAVKAPGFGDRRKAMLEDIAILTGGQVIAEETGLTLEKATLAELGQAKRIEVGKENTTIIDGAGEAVNIEARVKQIRTQIEEATSDYDREKLQERVAKLAGGVAVIKVGAATEVEMKEKKARVEDALHATRAAVEEGIVPGGGVALIRARTAIAALTGVNADQNAGIKIVLRAMEEPLRQIVTNGGEEASVVVAAVAAGKGNYGYNAATGEYVDMVEAGVVDPTKVTRTALQNAASVAGLLLTTDAAVAELPKEDAPMPGGMPGGMGGMGMDM.

ATP-binding positions include 30–33, Lys51, 87–91, Gly415, 479–481, and Asp495; these read TLGP, DGTTT, and NAA. A disordered region spans residues 526 to 546; sequence KEDAPMPGGMPGGMGGMGMDM. The span at 534-546 shows a compositional bias: gly residues; the sequence is GMPGGMGGMGMDM.

The protein belongs to the chaperonin (HSP60) family. As to quaternary structure, forms a cylinder of 14 subunits composed of two heptameric rings stacked back-to-back. Interacts with the co-chaperonin GroES.

It is found in the cytoplasm. The enzyme catalyses ATP + H2O + a folded polypeptide = ADP + phosphate + an unfolded polypeptide.. In terms of biological role, together with its co-chaperonin GroES, plays an essential role in assisting protein folding. The GroEL-GroES system forms a nano-cage that allows encapsulation of the non-native substrate proteins and provides a physical environment optimized to promote and accelerate protein folding. The protein is Chaperonin GroEL of Burkholderia thailandensis.